A 518-amino-acid polypeptide reads, in one-letter code: Protein nucleotidyltransferase YdiU (518 aa).

The span at 1–10 shows a compositional bias: basic and acidic residues; that stretch reads MTHLRFDNRL. A disordered region spans residues 1-23; it reads MTHLRFDNRLRQQLPGDPEEGSR. Positions 100, 102, 103, 123, 135, 136, 193, and 200 each coordinate ATP. Asp-270 serves as the catalytic Proton acceptor. 2 residues coordinate Mg(2+): Asn-271 and Asp-280. Asp-280 serves as a coordination point for ATP.

Belongs to the SELO family. Mg(2+) is required as a cofactor. It depends on Mn(2+) as a cofactor.

The enzyme catalyses L-seryl-[protein] + ATP = 3-O-(5'-adenylyl)-L-seryl-[protein] + diphosphate. The catalysed reaction is L-threonyl-[protein] + ATP = 3-O-(5'-adenylyl)-L-threonyl-[protein] + diphosphate. It carries out the reaction L-tyrosyl-[protein] + ATP = O-(5'-adenylyl)-L-tyrosyl-[protein] + diphosphate. It catalyses the reaction L-histidyl-[protein] + UTP = N(tele)-(5'-uridylyl)-L-histidyl-[protein] + diphosphate. The enzyme catalyses L-seryl-[protein] + UTP = O-(5'-uridylyl)-L-seryl-[protein] + diphosphate. The catalysed reaction is L-tyrosyl-[protein] + UTP = O-(5'-uridylyl)-L-tyrosyl-[protein] + diphosphate. Its function is as follows. Nucleotidyltransferase involved in the post-translational modification of proteins. It can catalyze the addition of adenosine monophosphate (AMP) or uridine monophosphate (UMP) to a protein, resulting in modifications known as AMPylation and UMPylation. This is Protein nucleotidyltransferase YdiU from Xanthomonas axonopodis pv. citri (strain 306).